A 120-amino-acid chain; its full sequence is uncharacterized protein (120 aa).

The protein to phage T4 y06Q.

This is an uncharacterized protein from Escherichia coli (strain K12).